A 385-amino-acid chain; its full sequence is Putative glutamate--cysteine ligase 2 (385 aa).

It belongs to the glutamate--cysteine ligase type 2 family. YbdK subfamily.

The enzyme catalyses L-cysteine + L-glutamate + ATP = gamma-L-glutamyl-L-cysteine + ADP + phosphate + H(+). ATP-dependent carboxylate-amine ligase which exhibits weak glutamate--cysteine ligase activity. In Herpetosiphon aurantiacus (strain ATCC 23779 / DSM 785 / 114-95), this protein is Putative glutamate--cysteine ligase 2.